A 281-amino-acid polypeptide reads, in one-letter code: NADPH-dependent 7-cyano-7-deazaguanine reductase (281 aa).

A substrate-binding site is contributed by 88–90 (IES). Position 90-91 (90-91 (SK)) interacts with NADPH. Cys-189 acts as the Thioimide intermediate in catalysis. The active-site Proton donor is the Asp-196. A substrate-binding site is contributed by 228–229 (HE). Position 257–258 (257–258 (RG)) interacts with NADPH.

This sequence belongs to the GTP cyclohydrolase I family. QueF type 2 subfamily. In terms of assembly, homodimer.

It is found in the cytoplasm. It catalyses the reaction 7-aminomethyl-7-carbaguanine + 2 NADP(+) = 7-cyano-7-deazaguanine + 2 NADPH + 3 H(+). Its pathway is tRNA modification; tRNA-queuosine biosynthesis. In terms of biological role, catalyzes the NADPH-dependent reduction of 7-cyano-7-deazaguanine (preQ0) to 7-aminomethyl-7-deazaguanine (preQ1). In Sodalis glossinidius (strain morsitans), this protein is NADPH-dependent 7-cyano-7-deazaguanine reductase.